Consider the following 495-residue polypeptide: Polybrominated aromatic compounds synthase (495 aa).

C437 provides a ligand contact to heme.

This sequence belongs to the cytochrome P450 family. Heme is required as a cofactor.

Cytochrome P450 protein involved in the biosynthesis of polybrominated aromatic organic compounds. In the presence of ferredoxin, ferredoxin reductase and NADH, catalyzes the coupling of bromophenols and bromopyrroles, forming various polybrominated biphenyls and hydroxylated polybrominated diphenyl ethers (OH-BDE). Can also mediate the heterocoupling of 3,5-dibromocatechol, forming six different compounds, including polybrominated dibenzo-p-dioxins, which are among the most toxic molecules known to man. This chain is Polybrominated aromatic compounds synthase, found in Marinomonas mediterranea (strain ATCC 700492 / JCM 21426 / NBRC 103028 / MMB-1).